The sequence spans 181 residues: ATP-dependent protease subunit HslV (181 aa).

Thr7 is a catalytic residue. Gly166, Cys169, and Thr172 together coordinate Na(+).

It belongs to the peptidase T1B family. HslV subfamily. In terms of assembly, a double ring-shaped homohexamer of HslV is capped on each side by a ring-shaped HslU homohexamer. The assembly of the HslU/HslV complex is dependent on binding of ATP.

Its subcellular location is the cytoplasm. It carries out the reaction ATP-dependent cleavage of peptide bonds with broad specificity.. With respect to regulation, allosterically activated by HslU binding. Protease subunit of a proteasome-like degradation complex believed to be a general protein degrading machinery. This chain is ATP-dependent protease subunit HslV, found in Acidovorax ebreus (strain TPSY) (Diaphorobacter sp. (strain TPSY)).